The sequence spans 239 residues: Ribonuclease HII (239 aa).

The RNase H type-2 domain maps to 30–221 (GPVAGVDEVG…VRRLVTAGTP (192 aa)). Positions 36, 37, and 130 each coordinate a divalent metal cation.

It belongs to the RNase HII family. The cofactor is Mn(2+). Requires Mg(2+) as cofactor.

The protein resides in the cytoplasm. It carries out the reaction Endonucleolytic cleavage to 5'-phosphomonoester.. Its function is as follows. Endonuclease that specifically degrades the RNA of RNA-DNA hybrids. The protein is Ribonuclease HII of Mycobacterium sp. (strain JLS).